Consider the following 208-residue polypeptide: Small ribosomal subunit protein uS3 (208 aa).

Positions 16 to 85 (IDEYFKKELS…KPQIDVKPVE (70 aa)) constitute a KH type-2 domain.

It belongs to the universal ribosomal protein uS3 family. As to quaternary structure, part of the 30S ribosomal subunit.

In terms of biological role, binds the lower part of the 30S subunit head. The chain is Small ribosomal subunit protein uS3 from Methanocaldococcus jannaschii (strain ATCC 43067 / DSM 2661 / JAL-1 / JCM 10045 / NBRC 100440) (Methanococcus jannaschii).